A 104-amino-acid polypeptide reads, in one-letter code: MAENQWVLYLLKTKSGMLYTGITTNIHRRFAQHENGKGAKSLRGKGPLQLVFSSYAGDRSNASQLEYQVKQLSKQQKERLVICQPVCIAEYLASIRNGQSVRSK.

Residues N4 to R79 enclose the GIY-YIG domain.

Belongs to the UPF0213 family.

The sequence is that of UPF0213 protein plu4503 from Photorhabdus laumondii subsp. laumondii (strain DSM 15139 / CIP 105565 / TT01) (Photorhabdus luminescens subsp. laumondii).